Consider the following 309-residue polypeptide: Protein FdhE (309 aa).

Belongs to the FdhE family.

It localises to the cytoplasm. Necessary for formate dehydrogenase activity. The polypeptide is Protein FdhE (Escherichia coli (strain K12 / MC4100 / BW2952)).